A 348-amino-acid chain; its full sequence is GMP reductase 2 (348 aa).

Residues 26 to 27 (SR), K78, 129 to 131 (DVA), and 180 to 181 (IG) each bind NADP(+). 3 residues coordinate K(+): G181, G183, and C186. The Thioimidate intermediate role is filled by C186. The Proton donor/acceptor role is filled by T188. K(+) is bound at residue R189. Residues 219–221 (DGG), 242–243 (GG), 268–270 (GMS), and 286–290 (RASEG) contribute to the GMP site. Residues M269 and 285 to 286 (YR) contribute to the NADP(+) site. An N6-acetyllysine modification is found at K291. 314–317 (STCT) lines the NADP(+) pocket.

It belongs to the IMPDH/GMPR family. GuaC type 1 subfamily. As to quaternary structure, homotetramer. Highly expressed in heart, skeletal muscle, kidney, brain, liver, prostate, spleen, placenta, testis and ovary. Low expression in colon, thymus and peripheral blood leukocytes.

It catalyses the reaction IMP + NH4(+) + NADP(+) = GMP + NADPH + 2 H(+). Functionally, catalyzes the irreversible NADPH-dependent deamination of GMP to IMP. It functions in the conversion of nucleobase, nucleoside and nucleotide derivatives of G to A nucleotides, and in maintaining the intracellular balance of A and G nucleotides. Plays a role in modulating cellular differentiation. This is GMP reductase 2 from Homo sapiens (Human).